A 439-amino-acid polypeptide reads, in one-letter code: Exodeoxyribonuclease 7 large subunit (439 aa).

The protein belongs to the XseA family. In terms of assembly, heterooligomer composed of large and small subunits.

It is found in the cytoplasm. The catalysed reaction is Exonucleolytic cleavage in either 5'- to 3'- or 3'- to 5'-direction to yield nucleoside 5'-phosphates.. Its function is as follows. Bidirectionally degrades single-stranded DNA into large acid-insoluble oligonucleotides, which are then degraded further into small acid-soluble oligonucleotides. This chain is Exodeoxyribonuclease 7 large subunit, found in Haemophilus influenzae (strain ATCC 51907 / DSM 11121 / KW20 / Rd).